The following is a 389-amino-acid chain: Tryptophan 2,3-dioxygenase (389 aa).

Residues 60 to 64 (FIITH) and Arg131 each bind substrate. His316 serves as a coordination point for heme. Thr331 contacts substrate.

Belongs to the tryptophan 2,3-dioxygenase family. As to quaternary structure, homotetramer. Dimer of dimers. Heme is required as a cofactor.

The catalysed reaction is L-tryptophan + O2 = N-formyl-L-kynurenine. The protein operates within amino-acid degradation; L-tryptophan degradation via kynurenine pathway; L-kynurenine from L-tryptophan: step 1/2. It participates in pigment biosynthesis; ommochrome biosynthesis. Functionally, heme-dependent dioxygenase that catalyzes the oxidative cleavage of the L-tryptophan (L-Trp) pyrrole ring and converts L-tryptophan to N-formyl-L-kynurenine. Catalyzes the oxidative cleavage of the indole moiety. This Mayetiola destructor (Hessian fly) protein is Tryptophan 2,3-dioxygenase.